The following is a 390-amino-acid chain: Acetylornithine aminotransferase (390 aa).

Pyridoxal 5'-phosphate contacts are provided by residues 103 to 104 (GT) and F129. R132 contacts N(2)-acetyl-L-ornithine. Residue 214–217 (DEVQ) participates in pyridoxal 5'-phosphate binding. Residue K243 is modified to N6-(pyridoxal phosphate)lysine. S271 serves as a coordination point for N(2)-acetyl-L-ornithine. Pyridoxal 5'-phosphate is bound at residue T272. An Isoglutamyl lysine isopeptide (Lys-Gln) (interchain with Q-Cter in protein Pup) cross-link involves residue K304.

Belongs to the class-III pyridoxal-phosphate-dependent aminotransferase family. ArgD subfamily. Homodimer. Pyridoxal 5'-phosphate is required as a cofactor.

It localises to the cytoplasm. The catalysed reaction is N(2)-acetyl-L-ornithine + 2-oxoglutarate = N-acetyl-L-glutamate 5-semialdehyde + L-glutamate. It functions in the pathway amino-acid biosynthesis; L-arginine biosynthesis; N(2)-acetyl-L-ornithine from L-glutamate: step 4/4. The chain is Acetylornithine aminotransferase from Mycolicibacterium smegmatis (strain ATCC 700084 / mc(2)155) (Mycobacterium smegmatis).